We begin with the raw amino-acid sequence, 509 residues long: Ribonuclease Y (509 aa).

Residues 5–25 (IIILLSVFCGIFFICFIICSS) traverse the membrane as a helical segment. One can recognise a KH domain in the interval 199 to 259 (TTNIVKLPSD…IRREIATRTL (61 aa)). The HD domain occupies 325–418 (VLAHSIEVAK…VAIADSISAS (94 aa)).

This sequence belongs to the RNase Y family.

The protein resides in the cell membrane. Functionally, endoribonuclease that initiates mRNA decay. The chain is Ribonuclease Y from Mycoplasma capricolum subsp. capricolum (strain California kid / ATCC 27343 / NCTC 10154).